The chain runs to 98 residues: Dehydrin HIRD11 (98 aa).

A disordered region spans residues Met-1 to Asp-98. Positions Lys-19 to Lys-72 are enriched in basic and acidic residues. Residues Lys-73 to Lys-82 are compositionally biased toward basic residues.

This sequence belongs to the KS-type dehydrin family. As to quaternary structure, interacts with PXL1. In terms of processing, phosphorylated in vivo. Phosphorylated in vitro by PXL1. Highly expressed in the cambial zone of the stem vasculature (at protein level). Expressed in roots, rosettes leaves, stems, cauline leaves, flowers and siliques.

Its subcellular location is the cytoplasm. The protein resides in the nucleus. Functionally, intrinsically disordered and metal-binding protein. Binds to the divalent cations cobalt, nickel, copper and zinc, but not to magnesium, calcium, manganese or cadmium. Binding to metal ions decreases disordered state, decreases susceptibility to trypsin and promotes self-association. Can reduce the formation of reactive oxygen species (ROS) in a copper-ascorbate in vitro system. This chain is Dehydrin HIRD11, found in Arabidopsis thaliana (Mouse-ear cress).